The primary structure comprises 614 residues: Zinc metalloproteinase-disintegrin-like protein H4 subunit A (614 aa).

The first 20 residues, 1-20, serve as a signal peptide directing secretion; sequence MIQPLLVVTCLVVFPYQVSS. The propeptide occupies 21–193; the sequence is IILESGNVND…RKASQLVATS (173 aa). Residue Glu-194 is modified to Pyrrolidone carboxylic acid (Glu). The Peptidase M12B domain occupies 201–397; that stretch reads KYIELVIVVD…IKSKCIDNKP (197 aa). N-linked (GlcNAc...) asparagine glycosylation occurs at Asn-220. 17 cysteine pairs are disulfide-bonded: Cys-312-Cys-392, Cys-352-Cys-376, Cys-354-Cys-359, Cys-408-Cys-437, Cys-419-Cys-432, Cys-421-Cys-427, Cys-431-Cys-454, Cys-445-Cys-451, Cys-450-Cys-476, Cys-463-Cys-483, Cys-470-Cys-502, Cys-495-Cys-507, Cys-514-Cys-564, Cys-529-Cys-575, Cys-542-Cys-552, Cys-559-Cys-601, and Cys-595-Cys-607. His-337 provides a ligand contact to Zn(2+). The Metal-binding motif lies at 337–348; sequence HELGHNLGMDHD. Glu-338 acts as the Proton acceptor in catalysis. Zn(2+)-binding residues include His-341 and His-347. The region spanning 405–491 is the Disintegrin domain; the sequence is PAFCGNYFVE…ECPTDVLQRN (87 aa). Positions 410, 412, 414, 417, and 420 each coordinate Ca(2+). N-linked (GlcNAc...) asparagine glycosylation is present at Asn-433. A D/ECD-tripeptide motif is present at residues 469 to 471; the sequence is ECD. 2 residues coordinate Ca(2+): Asp-471 and Asp-486.

Belongs to the venom metalloproteinase (M12B) family. P-III subfamily. As to quaternary structure, homodimer; disulfide-linked. Heterodimer of A and B subunits; disulfide-linked. Zn(2+) is required as a cofactor. In terms of processing, N-glycosylated. Post-translationally, the N-terminus is blocked. In terms of tissue distribution, expressed by the venom gland (at protein level). Expressed by the venom gland.

Its subcellular location is the secreted. The proteolytic activity of the heterodimer of A and B subunits requires Zn(2+) and Ca(2+) ions. Functionally, heterodimer (A and B subunits): Zinc metalloprotease that has fibrinogenolytic and hemorrhagic activities. Cleaves insulin B chain preferably at '40-Tyr-|-Leu-41' bond, but also at '28-Gln-|-His-29' and '34-His-|-Leu-35' bonds. Hydrolyzes effectively isolated extracellular matrix (ECM) bovine fibronectin, and only slightly, basal membrane (BM) proteins human collagen IV and murine laminin, in vitro. Cleaves nidogen-1 (at '350-Ser-|-Phe-351' and '380-Tyr-|-Asn-381' bonds), but not laminin, in a solubilized BM preparation. Hydrolyzes plasma proteins involved in blood coagulation in vitro. It slightly shortens prothrombin time and significantly prolongs thrombin time. Has potent alpha-fibrinogenase activity cleaving human fibrinogen alpha chain at '441-Glu-|-Leu-442' and '539-Glu-|-Phe-540' bonds, and to a lesser extent, beta chain at '52-Lys-|-Arg-53' and '48-Pro-|-Leu-49' bonds, but does not cleave gamma chain. Hydrolyzes bovine prothrombin at '200-Ser-|-Gly-201' bond, but does not activate it, however, it cleaves fragment 1 and prethrombin 1 from it. Hydrolyzes bovine factor X heavy chain, but the cleavage does not produce an activated factor Xa heavy chain. No hydrolysis or activation of plasminogen. The ability to degrade some of the ECM, BM and plasma proteins is likely the main contributor to its hemorrhagic activity. Inhibits platelet aggregation induced by collagen in vitro. Its binding to glycosaminoglycans (GAGs) may assist in concentrating it in the proximity of blood vessel walls enabling in vivo degradation of BM protein components. Cytotoxic to cultured HeLa cancer cells in a concentration- and time-dependent manner. In the solubilized BM preparation (Matrigel), it induces morphological changes in the HeLa cells and inhibits their adhesion, however, the viability of the cells is not reduced. This Vipera ammodytes ammodytes (Western sand viper) protein is Zinc metalloproteinase-disintegrin-like protein H4 subunit A.